Consider the following 200-residue polypeptide: 3-isopropylmalate dehydratase small subunit (200 aa).

Belongs to the LeuD family. LeuD type 1 subfamily. As to quaternary structure, heterodimer of LeuC and LeuD.

It catalyses the reaction (2R,3S)-3-isopropylmalate = (2S)-2-isopropylmalate. The protein operates within amino-acid biosynthesis; L-leucine biosynthesis; L-leucine from 3-methyl-2-oxobutanoate: step 2/4. In terms of biological role, catalyzes the isomerization between 2-isopropylmalate and 3-isopropylmalate, via the formation of 2-isopropylmaleate. This is 3-isopropylmalate dehydratase small subunit from Vibrio vulnificus (strain YJ016).